We begin with the raw amino-acid sequence, 1799 residues long: Putative neural-cadherin 2 (1799 aa).

9 N-linked (GlcNAc...) asparagine glycosylation sites follow: asparagine 13, asparagine 64, asparagine 86, asparagine 118, asparagine 195, asparagine 260, asparagine 264, asparagine 283, and asparagine 377. Cadherin domains lie at aspartate 37–phenylalanine 136, aspartate 137–phenylalanine 252, proline 253–phenylalanine 364, glutamate 368–phenylalanine 485, aspartate 486–phenylalanine 590, phenylalanine 590–serine 709, and glycine 708–methionine 812. 5 N-linked (GlcNAc...) asparagine glycosylation sites follow: asparagine 601, asparagine 793, asparagine 910, asparagine 948, and asparagine 969. The 38-residue stretch at glutamine 973–glutamine 1010 folds into the EGF-like 1 domain. Intrachain disulfides connect cysteine 977–cysteine 988, cysteine 982–cysteine 997, cysteine 1000–cysteine 1009, cysteine 1191–cysteine 1217, cysteine 1224–cysteine 1239, cysteine 1233–cysteine 1248, and cysteine 1250–cysteine 1259. In terms of domain architecture, Laminin G-like 1 spans glutamine 1011–cysteine 1217. The region spanning threonine 1220–asparagine 1260 is the EGF-like 2 domain. One can recognise a Laminin G-like 2 domain in the interval threonine 1263 to cysteine 1454. Asparagine 1376 and asparagine 1437 each carry an N-linked (GlcNAc...) asparagine glycan. 4 cysteine pairs are disulfide-bonded: cysteine 1419/cysteine 1454, cysteine 1501/cysteine 1512, cysteine 1506/cysteine 1523, and cysteine 1525/cysteine 1534. An EGF-like 3; calcium-binding domain is found at aspartate 1497–glutamate 1535. The helical transmembrane segment at alanine 1549–leucine 1569 threads the bilayer. The interval alanine 1726–leucine 1799 is disordered. Gly residues-rich tracts occupy residues aspartate 1733 to proline 1744, leucine 1752 to isoleucine 1763, and serine 1775 to serine 1786.

It localises to the cell membrane. Its function is as follows. Cadherins are calcium-dependent cell adhesion proteins. They preferentially interact with themselves in a homophilic manner in connecting cells. This chain is Putative neural-cadherin 2 (CadN2), found in Drosophila melanogaster (Fruit fly).